The primary structure comprises 183 residues: UPF0397 protein stu0306/stu0307 (183 aa).

5 consecutive transmembrane segments (helical) span residues 11–31 (ATGI…IPIF), 44–64 (VLFS…GFIG), 74–94 (GDIS…IGLF), 111–131 (IWFN…VTPI), and 149–169 (FVAG…LLAI).

Belongs to the UPF0397 family.

It is found in the cell membrane. This is UPF0397 protein stu0306/stu0307 from Streptococcus thermophilus (strain ATCC BAA-250 / LMG 18311).